A 151-amino-acid chain; its full sequence is Regulatory protein RecX (151 aa).

It belongs to the RecX family.

It is found in the cytoplasm. Its function is as follows. Modulates RecA activity. In Herminiimonas arsenicoxydans, this protein is Regulatory protein RecX.